Consider the following 281-residue polypeptide: CCAAT/enhancer-binding protein epsilon (281 aa).

The interval 1–30 (MSHGTYYECEPRAGQQPLEFSGARAGPGEL) is disordered. Lys121 participates in a covalent cross-link: Glycyl lysine isopeptide (Lys-Gly) (interchain with G-Cter in SUMO2). Ser181 bears the Phosphoserine mark. The region spanning 204 to 267 (SLEYRLRRER…DTLRNLFRQI (64 aa)) is the bZIP domain. The tract at residues 208–228 (RLRRERNNIAVRKSRDKAKRR) is basic motif. Residues 230–237 (LETQQKVL) are leucine-zipper.

It belongs to the bZIP family. C/EBP subfamily. As to quaternary structure, binds DNA as a homodimer and as a heterodimer. Can form stable heterodimers with CEBPA, CEBPB and CEBPD. Interacts with GATA1 and SPI1. Interacts with SMARCD2. Phosphorylated.

It is found in the nucleus. Transcriptional activator. C/EBP are DNA-binding proteins that recognize two different motifs: the CCAAT homology common to many promoters and the enhanced core homology common to many enhancers. Required for the promyelocyte-myelocyte transition in myeloid differentiation. In Ovis aries (Sheep), this protein is CCAAT/enhancer-binding protein epsilon (CEBPE).